An 891-amino-acid chain; its full sequence is DNA mismatch repair protein MutS (891 aa).

An ATP-binding site is contributed by 632–639 (GPNMAGKS).

Belongs to the DNA mismatch repair MutS family.

In terms of biological role, this protein is involved in the repair of mismatches in DNA. It is possible that it carries out the mismatch recognition step. This protein has a weak ATPase activity. The protein is DNA mismatch repair protein MutS of Rhodopirellula baltica (strain DSM 10527 / NCIMB 13988 / SH1).